The primary structure comprises 989 residues: Voltage-gated delayed rectifier potassium channel KCNH1 (989 aa).

Topologically, residues 1–220 (MTMAGGRRGL…LHYCVFKTTW (220 aa)) are cytoplasmic. Residues 14–94 (QNTFLENIVR…QTFENYEMNS (81 aa)) enclose the PAS domain. Positions 93–145 (NSFEILMYKKNRTPVWFFVKIAPIRNEQDKVVLFLCTFSDITAFKQPIEDDSC) constitute a PAC domain. Residues 151-162 (FARLTRALTSSR) form a required for phosphatidylinositol bisphosphate binding region. The chain crosses the membrane as a helical span at residues 221–241 (DWIILILTFYTAILVPYNVSF). At 242–248 (KTRQNNV) the chain is on the extracellular side. Residues 249 to 269 (AWLVVDSIVDVIFLVDIVLNF) form a helical membrane-spanning segment. At 270–290 (HTTFVGPAGEVISDPKLIRMN) the chain is on the cytoplasmic side. A helical membrane pass occupies residues 291–309 (YLKTWFVIDLLSCLPYDVI). Residues 310 to 345 (NAFENVDEVSAFMGDPGKIGFADQIPPPLEGRESQG) are Extracellular-facing. The helical; Voltage-sensor transmembrane segment at 346–368 (ISSLFSSLKVVRLLRLGRVARKL) threads the bilayer. The Cytoplasmic segment spans residues 369–377 (DHYIEYGAA). Residues 378–399 (VLVLLVCVFGLAAHWMACIWYS) form a helical membrane-spanning segment. Topologically, residues 400–448 (IGDYEIFDEDTKTIRNNSWLYQLAMDIGTPYQFNGSGSGKWEGGPSKNS) are extracellular. N-linked (GlcNAc...) asparagine glycosylation is found at Asn415 and Asn433. The pore-forming intramembrane region spans 449–470 (VYISSLYFTMTSLTSVGFGNIA). A Selectivity filter motif is present at residues 463–468 (SVGFGN). Residues 471 to 477 (PSTDIEK) are Extracellular-facing. Residues 478–498 (IFAVAIMMIGSLLYATIFGNV) traverse the membrane as a helical segment. Topologically, residues 499–989 (TTIFQQMYAN…ESERDIFGAS (491 aa)) are cytoplasmic. The interval 673-770 (KRDALQKVLE…LDDLDVEKGN (98 aa)) is calmodulin-binding. The interaction with cyclic nucleotide-binding pocket stretch occupies residues 699 to 701 (YNL). Residues 855 to 879 (KAESMETLPERTKASGEATLKKTDS) are compositionally biased toward basic and acidic residues. Disordered regions lie at residues 855 to 886 (KAES…GITK) and 962 to 989 (RSSQ…FGAS). The segment at 924-964 (ATVLEVRHELKEDIKALNAKMTNIEKQLSEILRILTSRRSS) is CAD (involved in subunit assembly). Residues Ser974, Ser978, and Ser981 each carry the phosphoserine modification. The span at 980–989 (ESERDIFGAS) shows a compositional bias: basic and acidic residues.

It belongs to the potassium channel family. H (Eag) (TC 1.A.1.20) subfamily. Kv10.1/KCNH1 sub-subfamily. As to quaternary structure, homomultimer. The potassium channel is composed of a homo- or heterotetrameric complex of pore-forming alpha subunits that can associate with modulating beta subunits. Heteromultimer with KCNH5/EAG2. Interacts with ALG10B. Interacts with RABEP1. Interacts (via C-terminus) with CTTN. Interacts (via C-terminal cytoplasmic region) with Ca(2+)-bound calmodulin. Interacts with the spider kappa-theraphotoxin-Aa1a and mu/kappa-theraphotoxin-Ap1a. In terms of processing, channel activity is regulated via tyrosine phosphorylation/dephosphorylation by SRC and PTPN6. As to expression, highly expressed in brain and in myoblasts at the onset of fusion, but not in other tissues. Detected in HeLa (cervical carcinoma), SH-SY5Y (neuroblastoma) and MCF-7 (epithelial tumor) cells, but not in normal epithelial cells.

The protein localises to the cell membrane. Its subcellular location is the nucleus inner membrane. It localises to the cell projection. The protein resides in the dendrite. It is found in the axon. The protein localises to the presynaptic cell membrane. Its subcellular location is the perikaryon. It localises to the postsynaptic density membrane. The protein resides in the early endosome membrane. The enzyme catalyses K(+)(in) = K(+)(out). With respect to regulation, channel activity is inhibited by interaction with Ca(2+)-bound calmodulin. Interaction of a single pore-forming alpha subunit with a calmodulin chain is sufficient to promote channel closure. Channel activity is not regulated by cyclic nucleotides. Channel activity is inhibited by binding intracellular phosphatidylinositol-3,5-bisphosphate and phosphatidylinositol-4,5-bisphosphate (PIP2), but is not inhibited by phosphatidylinositol 4-phosphate. Inhibited by the spider kappa-theraphotoxin-Aa1a and mu/kappa-theraphotoxin-Ap1a. In terms of biological role, pore-forming (alpha) subunit of a voltage-gated delayed rectifier potassium channel that mediates outward-rectifying potassium currents which, on depolarization, reaches a steady-state level and do not inactivate. The activation kinetics depend on the prepulse potential and external divalent cation concentration. With negative prepulses, the current activation is delayed and slowed down several fold, whereas more positive prepulses speed up activation. The time course of activation is biphasic with a fast and a slowly activating current component. Activates at more positive membrane potentials and exhibit a steeper activation curve. Channel properties are modulated by subunit assembly. Mediates IK(NI) current in myoblasts. Involved in the regulation of cell proliferation and differentiation, in particular adipogenic and osteogenic differentiation in bone marrow-derived mesenchymal stem cells (MSCs). The sequence is that of Voltage-gated delayed rectifier potassium channel KCNH1 from Homo sapiens (Human).